Here is a 542-residue protein sequence, read N- to C-terminus: CTP synthase (542 aa).

Residues 1 to 265 are amidoligase domain; sequence MTRYIFVTGG…DDFVVERFGL (265 aa). Serine 13 is a binding site for CTP. Position 13 (serine 13) interacts with UTP. Residues 14–19 and aspartate 71 each bind ATP; that span reads SLGKGI. Mg(2+) contacts are provided by aspartate 71 and glutamate 139. CTP is bound by residues 146-148, 186-191, and lysine 222; these read DIE and KTKPTQ. UTP-binding positions include 186 to 191 and lysine 222; that span reads KTKPTQ. The Glutamine amidotransferase type-1 domain maps to 290–541; sequence TIAMVGKYME…VKAALAQKNK (252 aa). Glycine 351 is a binding site for L-glutamine. Cysteine 378 (nucleophile; for glutamine hydrolysis) is an active-site residue. L-glutamine contacts are provided by residues 379-382, glutamate 402, and arginine 469; that span reads LGMQ. Catalysis depends on residues histidine 514 and glutamate 516.

It belongs to the CTP synthase family. As to quaternary structure, homotetramer.

The enzyme catalyses UTP + L-glutamine + ATP + H2O = CTP + L-glutamate + ADP + phosphate + 2 H(+). It catalyses the reaction L-glutamine + H2O = L-glutamate + NH4(+). The catalysed reaction is UTP + NH4(+) + ATP = CTP + ADP + phosphate + 2 H(+). Its pathway is pyrimidine metabolism; CTP biosynthesis via de novo pathway; CTP from UDP: step 2/2. Its activity is regulated as follows. Allosterically activated by GTP, when glutamine is the substrate; GTP has no effect on the reaction when ammonia is the substrate. The allosteric effector GTP functions by stabilizing the protein conformation that binds the tetrahedral intermediate(s) formed during glutamine hydrolysis. Inhibited by the product CTP, via allosteric rather than competitive inhibition. Its function is as follows. Catalyzes the ATP-dependent amination of UTP to CTP with either L-glutamine or ammonia as the source of nitrogen. Regulates intracellular CTP levels through interactions with the four ribonucleotide triphosphates. The protein is CTP synthase of Pseudomonas putida (strain W619).